Here is a 531-residue protein sequence, read N- to C-terminus: Lysine--tRNA ligase, mitochondrial (531 aa).

The transit peptide at 1–18 (MISRGLLSKGILSIIKRK) directs the protein to the mitochondrion.

It belongs to the class-II aminoacyl-tRNA synthetase family.

It localises to the mitochondrion. It carries out the reaction tRNA(Lys) + L-lysine + ATP = L-lysyl-tRNA(Lys) + AMP + diphosphate. The polypeptide is Lysine--tRNA ligase, mitochondrial (msk1) (Schizosaccharomyces pombe (strain 972 / ATCC 24843) (Fission yeast)).